The chain runs to 469 residues: Acetyl-CoA decarbonylase/synthase complex subunit beta 1 (469 aa).

Residues C189, C192, C278, and C280 each coordinate [Ni-Fe-S] cluster.

The protein belongs to the CdhC family. As to quaternary structure, monomer. The ACDS complex is made up of alpha, epsilon, beta, gamma and delta chains with a probable stoichiometry of (alpha(2)epsilon(2))(4)-beta(8)-(gamma(1)delta(1))(8) (Potential). [Ni-Fe-S] cluster is required as a cofactor.

It catalyses the reaction Co(I)-[corrinoid Fe-S protein] + acetyl-CoA + H(+) = methyl-Co(III)-[corrinoid Fe-S protein] + CO + CoA. It participates in one-carbon metabolism; methanogenesis from acetate. Functionally, part of a complex that catalyzes the reversible cleavage of acetyl-CoA, allowing growth on acetate as sole source of carbon and energy. The alpha-epsilon complex generates CO from CO(2), while the beta subunit (this protein) combines the CO with CoA and a methyl group to form acetyl-CoA. The methyl group, which is incorporated into acetyl-CoA, is transferred to the beta subunit by a corrinoid iron-sulfur protein (the gamma-delta complex). The protein is Acetyl-CoA decarbonylase/synthase complex subunit beta 1 (cdhC1) of Methanosarcina thermophila.